The following is a 250-amino-acid chain: Iron-sulfur assembly protein 1 (250 aa).

The tract at residues 54–89 is disordered; it reads AADSVSPDSQRPGKKPFKFIVSNQSKSSKASKSPKW. Residues 75-89 show a composition bias toward low complexity; it reads SNQSKSSKASKSPKW. Fe cation is bound by residues C178, C242, and C244.

Belongs to the HesB/IscA family.

The protein localises to the mitochondrion matrix. In terms of biological role, involved in the assembly of mitochondrial and cytoplasmic iron-sulfur proteins. Probably involved in the binding of an intermediate of Fe/S cluster assembly. This chain is Iron-sulfur assembly protein 1 (ISA1), found in Saccharomyces cerevisiae (strain ATCC 204508 / S288c) (Baker's yeast).